Here is a 479-residue protein sequence, read N- to C-terminus: MGSPAAPEGALGYVREFTRHSSDVLGNLNELRLRGILTDVTLLVGGQPLRAHKAVLIACSGFFYSIFRGRAGVGVDVLSLPGGPEARGFAPLLDFMYTSRLRLSPATAPAVLAAATYLQMEHVVQACHRFIQASYEPLGISLRPLEAEPPTPPTAPPPGSPRRSEGHPDPPTESRSCSQGPPSPASPDPKACNWKKYKYIVLNSQASQAGSLVGERSSGQPCPQARLPSGDEASSSSSSSSSSSEEGPIPGPQSRLSPTAATVQFKCGAPASTPYLLTSQAQDTSGSPSERARPLPGSEFFSCQNCEAVAGCSSGLDSLVPGDEDKPYKCQLCRSSFRYKGNLASHRTVHTGEKPYHCSICGARFNRPANLKTHSRIHSGEKPYKCETCGSRFVQVAHLRAHVLIHTGEKPYPCPTCGTRFRHLQTLKSHVRIHTGEKPYHCDPCGLHFRHKSQLRLHLRQKHGAATNTKVHYHILGGP.

The 68-residue stretch at 38 to 105 (TDVTLLVGGQ…MYTSRLRLSP (68 aa)) folds into the BTB domain. Disordered regions lie at residues 143 to 190 (RPLE…PDPK) and 210 to 259 (GSLV…LSPT). A compositionally biased stretch (pro residues) spans 147 to 160 (AEPPTPPTAPPPGS). Residues 162 to 172 (RRSEGHPDPPT) show a composition bias toward basic and acidic residues. Residues 234–244 (SSSSSSSSSSS) show a composition bias toward low complexity. 5 consecutive C2H2-type zinc fingers follow at residues 328 to 350 (YKCQLCRSSFRYKGNLASHRTVH), 356 to 378 (YHCSICGARFNRPANLKTHSRIH), 384 to 406 (YKCETCGSRFVQVAHLRAHVLIH), 412 to 434 (YPCPTCGTRFRHLQTLKSHVRIH), and 440 to 463 (YHCDPCGLHFRHKSQLRLHLRQKH).

In terms of assembly, associates with BCL6 through the BTB domain. Ubiquitously expressed with higher expression found in heart and placenta.

It is found in the nucleus. Its function is as follows. Acts as a sequence-specific transcriptional repressor in association with BCL6. May function in a narrow stage or be related to some events in the early B-cell development. This is B-cell CLL/lymphoma 6 member B protein (BCL6B) from Homo sapiens (Human).